A 523-amino-acid polypeptide reads, in one-letter code: Thiamine pathway transporter THI73 (523 aa).

Over 1–79 the chain is Cytoplasmic; the sequence is MKNMSQRSMD…LSPKVLRKVD (79 aa). A helical transmembrane segment spans residues 80–100; the sequence is LFILPFLCCTYLLMFLDKALL. Over 101–118 the chain is Extracellular; sequence NYAASMGIKDHLKGNEFS. The helical transmembrane segment at 119–139 threads the bilayer; the sequence is NLGTIFSAAYIFMEPVVTYLI. The Cytoplasmic segment spans residues 140–141; the sequence is QK. Residues 142-162 form a helical membrane-spanning segment; it reads FPISKILGTFITVWGIVLACH. Over 163-176 the chain is Extracellular; the sequence is AACKTYASLMVVRT. Residues 177-197 traverse the membrane as a helical segment; that stretch reads LLGLFESSSAVGCIAISGMYY. The Cytoplasmic segment spans residues 198–207; sequence TKSEQSARIG. A helical transmembrane segment spans residues 208–228; it reads FWATQAGTGYIVGGLISFGFL. Residues 229-239 lie on the Extracellular side of the membrane; the sequence is HYHGTAFTSWQ. Residues 240–260 traverse the membrane as a helical segment; that stretch reads IMFLVVGLVTVAFGVLTFLYL. The Cytoplasmic portion of the chain corresponds to 261–312; sequence PDNVTNAWFLNKEEKIQVVEHIRANQTGLETKKFKKQQVKELFLHDKFTWPM. Residues 313–333 form a helical membrane-spanning segment; it reads LLLTACSQISTGAIGTFSVTI. The Extracellular segment spans residues 334–345; the sequence is TGTFGFDKYETA. Residues 346–366 traverse the membrane as a helical segment; it reads LLQLPIGAITAMIILITTQML. Over 367 to 371 the chain is Cytoplasmic; sequence SRWGH. Residues 372-392 form a helical membrane-spanning segment; that stretch reads ITLITTSMYIPAIIGCIVLIS. Residues 393-400 lie on the Extracellular side of the membrane; the sequence is LPLSHKIG. The chain crosses the membrane as a helical span at residues 401 to 421; sequence NLFSLYLLYSGSCVITNIYIW. Residues 422-432 are Cytoplasmic-facing; that stretch reads NSCNTSGYTKR. Residues 433 to 452 traverse the membrane as a helical segment; that stretch reads VFRNAITMIVYNVSCIIAPQ. The Extracellular portion of the chain corresponds to 453 to 466; the sequence is MFRAYSAPRYIPAK. A helical membrane pass occupies residues 467–487; it reads IALLVTQCVCVPLQLYIGYIC. Residues 488 to 523 are Cytoplasmic-facing; sequence KKENEKRDKEQEGQERKKYQFLDLTDIENRNFRYIY.

It belongs to the major facilitator superfamily. Allantoate permease family.

It is found in the endoplasmic reticulum membrane. The protein resides in the cell membrane. In terms of biological role, transports either thiamine or, rather, a related metabolite involved in the thiamine biosynthesis pathway. The polypeptide is Thiamine pathway transporter THI73 (THI73) (Saccharomyces cerevisiae (strain ATCC 204508 / S288c) (Baker's yeast)).